The following is a 494-amino-acid chain: Costunolide synthase (494 aa).

The chain crosses the membrane as a helical span at residues 3–23 (PLTIVSLVVASLFLFAFWALS). Residue Cys432 coordinates heme.

The protein belongs to the cytochrome P450 family. Heme is required as a cofactor.

It localises to the membrane. The enzyme catalyses germacra-1(10),4,11(13)-trien-12-oate + reduced [NADPH--hemoprotein reductase] + O2 = (+)-costunolide + oxidized [NADPH--hemoprotein reductase] + 2 H2O. Hydroxylates germacrene A acid to 6-alpha-hydroxy-germacrne A acid, a precursor of sesquiterpene lactones that spontaneously undergoes a lactonization which yields costunolide. Costunolide can then spontaneously conjugate to glutathione or cysteine. In Cichorium intybus (Chicory), this protein is Costunolide synthase (CYP71BL3).